A 369-amino-acid chain; its full sequence is Peptide chain release factor 2 (369 aa).

Gln249 carries the post-translational modification N5-methylglutamine.

This sequence belongs to the prokaryotic/mitochondrial release factor family. Methylated by PrmC. Methylation increases the termination efficiency of RF2.

It is found in the cytoplasm. Its function is as follows. Peptide chain release factor 2 directs the termination of translation in response to the peptide chain termination codons UGA and UAA. This Thermosipho melanesiensis (strain DSM 12029 / CIP 104789 / BI429) protein is Peptide chain release factor 2.